The following is a 194-amino-acid chain: Large ribosomal subunit protein bL25B (194 aa).

This sequence belongs to the bacterial ribosomal protein bL25 family. CTC subfamily. Part of the 50S ribosomal subunit; part of the 5S rRNA/L5/L18/L25 subcomplex. Contacts the 5S rRNA. Binds to the 5S rRNA independently of L5 and L18.

Functionally, this is one of the proteins that binds to the 5S RNA in the ribosome where it forms part of the central protuberance. This Symbiobacterium thermophilum (strain DSM 24528 / JCM 14929 / IAM 14863 / T) protein is Large ribosomal subunit protein bL25B.